The following is a 794-amino-acid chain: uncharacterized protein (794 aa).

An N-terminal signal peptide occupies residues 1-22; sequence MKLKYGTIIFSGLLGVSAILAA. Cysteine 23 carries N-palmitoyl cysteine lipidation. Cysteine 23 carries the S-diacylglycerol cysteine lipid modification. Polar residues predominate over residues 177–196; the sequence is SSGKTQVSQTSSGSNQQKTL. Disordered regions lie at residues 177–208, 220–257, and 466–506; these read SSGKTQVSQTSSGSNQQKTLQKPLKIDTSDSS, AKNNGKKANNSKSNRRSTDQSTQTHNDQGDASESDKKI, and KSTD…ENNS. Residues 220 to 231 show a composition bias toward low complexity; it reads AKNNGKKANNSK. Residues 238-250 show a composition bias toward polar residues; sequence DQSTQTHNDQGDA.

It belongs to the MG185/MG260 family.

The protein resides in the cell membrane. This is an uncharacterized protein from Mycoplasma pneumoniae (strain ATCC 29342 / M129 / Subtype 1) (Mycoplasmoides pneumoniae).